A 250-amino-acid polypeptide reads, in one-letter code: 4-hydroxy-tetrahydrodipicolinate reductase (250 aa).

NAD(+) contacts are provided by residues 9–14 (GATGKM), 79–81 (GTT), and 103–106 (SANM). Catalysis depends on histidine 135, which acts as the Proton donor/acceptor. Residue histidine 136 coordinates (S)-2,3,4,5-tetrahydrodipicolinate. The active-site Proton donor is the lysine 139. Position 145-146 (145-146 (GT)) interacts with (S)-2,3,4,5-tetrahydrodipicolinate.

It belongs to the DapB family.

The protein resides in the cytoplasm. The enzyme catalyses (S)-2,3,4,5-tetrahydrodipicolinate + NAD(+) + H2O = (2S,4S)-4-hydroxy-2,3,4,5-tetrahydrodipicolinate + NADH + H(+). It catalyses the reaction (S)-2,3,4,5-tetrahydrodipicolinate + NADP(+) + H2O = (2S,4S)-4-hydroxy-2,3,4,5-tetrahydrodipicolinate + NADPH + H(+). It participates in amino-acid biosynthesis; L-lysine biosynthesis via DAP pathway; (S)-tetrahydrodipicolinate from L-aspartate: step 4/4. Functionally, catalyzes the conversion of 4-hydroxy-tetrahydrodipicolinate (HTPA) to tetrahydrodipicolinate. This is 4-hydroxy-tetrahydrodipicolinate reductase from Rickettsia bellii (strain OSU 85-389).